A 308-amino-acid polypeptide reads, in one-letter code: CMP-N-acetylneuraminate:beta-galactoside alpha-2,3-sialyltransferase (308 aa).

The Proton acceptor role is filled by aspartate 201. Residues 221 to 225, 242 to 243, and 262 to 263 each bind CMP-N-acetyl-beta-neuraminate; these read LPHPR, FE, and SS. Catalysis depends on histidine 223, which acts as the Proton donor.

It belongs to the glycosyltransferase 52 family. The cofactor is Divalent metal cations are not required for the alpha-2,3-sialyltransferase activity..

In terms of biological role, catalyzes the transfer of sialic acid from the substrate CMP-N-acetylneuraminate to lactosyl lipids as preferred acceptor substrates in vitro, forming alpha-2,3-linked sialosides. Beta-1,4-linked galactosyl lipids are better substrates than beta-1,3-linked galactosyl lipids. The natural acceptor substrate may be cell surface oligosaccharides in lipooligosaccharide (LOS), whose sialylation has been demonstrated vital for the virulence of P.multocida. The polypeptide is CMP-N-acetylneuraminate:beta-galactoside alpha-2,3-sialyltransferase (lst) (Pasteurella multocida (strain Pm70)).